The chain runs to 125 residues: Large ribosomal subunit protein uL22c (125 aa).

The protein belongs to the universal ribosomal protein uL22 family. Part of the 50S ribosomal subunit.

Its subcellular location is the plastid. It is found in the chloroplast. Functionally, this protein binds specifically to 23S rRNA. The globular domain of the protein is located near the polypeptide exit tunnel on the outside of the subunit, while an extended beta-hairpin is found that lines the wall of the exit tunnel in the center of the 70S ribosome. This chain is Large ribosomal subunit protein uL22c (rpl22), found in Nuphar advena (Common spatterdock).